Here is a 304-residue protein sequence, read N- to C-terminus: Urease accessory protein UreD (304 aa).

This sequence belongs to the UreD family. UreD, UreF and UreG form a complex that acts as a GTP-hydrolysis-dependent molecular chaperone, activating the urease apoprotein by helping to assemble the nickel containing metallocenter of UreC. The UreE protein probably delivers the nickel.

It localises to the cytoplasm. Its function is as follows. Required for maturation of urease via the functional incorporation of the urease nickel metallocenter. The sequence is that of Urease accessory protein UreD from Haloquadratum walsbyi (strain DSM 16790 / HBSQ001).